The primary structure comprises 395 residues: Putative ankyrin repeat protein RF_0950 (395 aa).

ANK repeat units lie at residues 3–32 (YQKE…NPNT), 36–65 (YGKL…DPNA), 69–98 (IKDP…NPNV), 101–130 (RHEN…DPNQ), 134–166 (NGNT…EKAL), 172–201 (NGET…TVNI), and 205–234 (AGNT…ELNE). The region spanning 272–395 (KTKLIYQGGD…YLKVPILKEK (124 aa)) is the Glutamine amidotransferase type-1 domain. The Nucleophile role is filled by cysteine 377.

The polypeptide is Putative ankyrin repeat protein RF_0950 (Rickettsia felis (strain ATCC VR-1525 / URRWXCal2) (Rickettsia azadi)).